Here is a 159-residue protein sequence, read N- to C-terminus: Ribosomal RNA large subunit methyltransferase H (159 aa).

Residues leucine 76, glycine 108, and 127–132 (FGLLTF) each bind S-adenosyl-L-methionine.

This sequence belongs to the RNA methyltransferase RlmH family. Homodimer.

The protein resides in the cytoplasm. The enzyme catalyses pseudouridine(1915) in 23S rRNA + S-adenosyl-L-methionine = N(3)-methylpseudouridine(1915) in 23S rRNA + S-adenosyl-L-homocysteine + H(+). In terms of biological role, specifically methylates the pseudouridine at position 1915 (m3Psi1915) in 23S rRNA. This chain is Ribosomal RNA large subunit methyltransferase H, found in Streptococcus thermophilus (strain CNRZ 1066).